The sequence spans 333 residues: Protein XAP5 CIRCADIAN TIMEKEEPER (333 aa).

Coiled-coil stretches lie at residues 12–43 (AQDAVKIRRLEKQREAERRKIEELKNKSSDGQ) and 70–116 (TREQ…VRGD). A compositionally biased stretch (basic and acidic residues) spans 89 to 98 (EKEKLQKLQQ). Residues 89 to 171 (EKEKLQKLQQ…REREAEEQAE (83 aa)) form a disordered region. Over residues 123-136 (DEIENGSDEDEFEN) the composition is skewed to acidic residues. Positions 160-171 (PDREREAEEQAE) are enriched in basic and acidic residues.

This sequence belongs to the FAM50 family.

The protein localises to the nucleus. Its function is as follows. Involved in light regulation of the circadian clock and photomorphogenesis. The sequence is that of Protein XAP5 CIRCADIAN TIMEKEEPER (XCT) from Oryza sativa subsp. indica (Rice).